We begin with the raw amino-acid sequence, 944 residues long: Isoleucine--tRNA ligase (944 aa).

The short motif at 58–68 (PYANGSIHIGH) is the 'HIGH' region element. Glutamate 563 provides a ligand contact to L-isoleucyl-5'-AMP. The short motif at 604-608 (KMSKS) is the 'KMSKS' region element. Lysine 607 is a binding site for ATP. Zn(2+) contacts are provided by cysteine 907, cysteine 910, cysteine 927, and cysteine 930.

This sequence belongs to the class-I aminoacyl-tRNA synthetase family. IleS type 1 subfamily. As to quaternary structure, monomer. It depends on Zn(2+) as a cofactor.

It localises to the cytoplasm. It catalyses the reaction tRNA(Ile) + L-isoleucine + ATP = L-isoleucyl-tRNA(Ile) + AMP + diphosphate. Functionally, catalyzes the attachment of isoleucine to tRNA(Ile). As IleRS can inadvertently accommodate and process structurally similar amino acids such as valine, to avoid such errors it has two additional distinct tRNA(Ile)-dependent editing activities. One activity is designated as 'pretransfer' editing and involves the hydrolysis of activated Val-AMP. The other activity is designated 'posttransfer' editing and involves deacylation of mischarged Val-tRNA(Ile). The sequence is that of Isoleucine--tRNA ligase from Salmonella paratyphi A (strain ATCC 9150 / SARB42).